The sequence spans 351 residues: Cytochrome c biogenesis protein CcsA (351 aa).

Helical transmembrane passes span 12–32 (NISF…AAFP), 37–57 (LSIL…TLLG), 68–88 (ISNL…IHLI), 97–117 (LVGV…ALTL), 143–163 (MMLS…FLII), 259–279 (IIGL…VWAN), 294–314 (WALI…TKGW), and 320–340 (AILA…VNLL).

The protein belongs to the CcmF/CycK/Ccl1/NrfE/CcsA family. May interact with ccs1.

It is found in the cellular thylakoid membrane. Functionally, required during biogenesis of c-type cytochromes (cytochrome c6 and cytochrome f) at the step of heme attachment. The protein is Cytochrome c biogenesis protein CcsA of Trichodesmium erythraeum (strain IMS101).